A 120-amino-acid chain; its full sequence is Large ribosomal subunit protein uL18 (120 aa).

The protein belongs to the universal ribosomal protein uL18 family. In terms of assembly, part of the 50S ribosomal subunit; part of the 5S rRNA/L5/L18/L25 subcomplex. Contacts the 5S and 23S rRNAs.

This is one of the proteins that bind and probably mediate the attachment of the 5S RNA into the large ribosomal subunit, where it forms part of the central protuberance. This chain is Large ribosomal subunit protein uL18, found in Gluconacetobacter diazotrophicus (strain ATCC 49037 / DSM 5601 / CCUG 37298 / CIP 103539 / LMG 7603 / PAl5).